The sequence spans 153 residues: 3-hydroxyacyl-[acyl-carrier-protein] dehydratase FabZ (153 aa).

His-53 is an active-site residue.

This sequence belongs to the thioester dehydratase family. FabZ subfamily.

The protein resides in the cytoplasm. It carries out the reaction a (3R)-hydroxyacyl-[ACP] = a (2E)-enoyl-[ACP] + H2O. Its function is as follows. Involved in unsaturated fatty acids biosynthesis. Catalyzes the dehydration of short chain beta-hydroxyacyl-ACPs and long chain saturated and unsaturated beta-hydroxyacyl-ACPs. This is 3-hydroxyacyl-[acyl-carrier-protein] dehydratase FabZ from Lawsonia intracellularis (strain PHE/MN1-00).